The sequence spans 201 residues: MELLCIDSKEKVKISEKIFGQKFNESLVHQVVRSYRITKRQGTSAQKSRSEVIGSGKKPWRQKGTGRARAGSVKSPIWRSGGVTFAKKTRDFKHKINKKMYKNALKSIFSELCRQNRILIVKNFFVKSEKTKLLKKKLNEMNLENVLIISKTIDKNLVLSSRNLNKVHVCFPININPINLISFKKTIITIDAIKIIEEILT.

The interval 39–72 (KRQGTSAQKSRSEVIGSGKKPWRQKGTGRARAGS) is disordered.

It belongs to the universal ribosomal protein uL4 family. As to quaternary structure, part of the 50S ribosomal subunit.

Its function is as follows. One of the primary rRNA binding proteins, this protein initially binds near the 5'-end of the 23S rRNA. It is important during the early stages of 50S assembly. It makes multiple contacts with different domains of the 23S rRNA in the assembled 50S subunit and ribosome. In terms of biological role, forms part of the polypeptide exit tunnel. This chain is Large ribosomal subunit protein uL4, found in Wigglesworthia glossinidia brevipalpis.